The following is a 478-amino-acid chain: Alpha-1,3-mannosyl-glycoprotein 4-beta-N-acetylglucosaminyltransferase C (478 aa).

Topologically, residues 1 to 23 are cytoplasmic; it reads MFKFHQMKHIFEILDKMRCLRKR. Residues 24 to 44 form a helical; Signal-anchor for type II membrane protein membrane-spanning segment; the sequence is STVSFLGVLVIFLLFMNLYIE. The Lumenal portion of the chain corresponds to 45–478; it reads DSYVLEGDKQ…IIRSISIWTS (434 aa). N-linked (GlcNAc...) asparagine glycosylation is found at asparagine 84 and asparagine 215.

Belongs to the glycosyltransferase 54 family. A divalent metal cation serves as cofactor.

Its subcellular location is the golgi apparatus membrane. It catalyses the reaction N(4)-{beta-D-GlcNAc-(1-&gt;2)-alpha-D-Man-(1-&gt;3)-[beta-D-GlcNAc-(1-&gt;2)-alpha-D-Man-(1-&gt;6)]-beta-D-Man-(1-&gt;4)-beta-D-GlcNAc-(1-&gt;4)-beta-D-GlcNAc}-L-asparaginyl-[protein] + UDP-N-acetyl-alpha-D-glucosamine = N(4)-{beta-D-GlcNAc-(1-&gt;2)-[beta-D-GlcNAc-(1-&gt;4)]-alpha-D-Man-(1-&gt;3)-[beta-D-GlcNAc-(1-&gt;2)-alpha-D-Man-(1-&gt;6)]-beta-D-Man-(1-&gt;4)-beta-D-GlcNAc-(1-&gt;4)-beta-D-GlcNAc}-L-asparaginyl-[protein] + UDP + H(+). It functions in the pathway protein modification; protein glycosylation. In terms of biological role, glycosyltransferase that participates in the transfer of N-acetylglucosamine (GlcNAc) to the core mannose residues of N-linked glycans. Catalyzes the formation of the GlcNAcbeta1-4 branch on the GlcNAcbeta1-2Manalpha1-3 arm of the core structure of N-linked glycans. Essential for the production of tri- and tetra-antennary N-linked sugar chains. Does not catalyze the transfer of GlcNAc to the Manalpha1-6 arm to form GlcNAcBeta1-4Manalpha1-6 linkage ('GnT-VI' activity). The chain is Alpha-1,3-mannosyl-glycoprotein 4-beta-N-acetylglucosaminyltransferase C (MGAT4C) from Macaca fascicularis (Crab-eating macaque).